Consider the following 394-residue polypeptide: Phosphopentomutase (394 aa).

Positions 13, 286, 291, 327, 328, and 339 each coordinate Mn(2+).

This sequence belongs to the phosphopentomutase family. It depends on Mn(2+) as a cofactor.

It is found in the cytoplasm. The catalysed reaction is 2-deoxy-alpha-D-ribose 1-phosphate = 2-deoxy-D-ribose 5-phosphate. The enzyme catalyses alpha-D-ribose 1-phosphate = D-ribose 5-phosphate. It functions in the pathway carbohydrate degradation; 2-deoxy-D-ribose 1-phosphate degradation; D-glyceraldehyde 3-phosphate and acetaldehyde from 2-deoxy-alpha-D-ribose 1-phosphate: step 1/2. Its function is as follows. Isomerase that catalyzes the conversion of deoxy-ribose 1-phosphate (dRib-1-P) and ribose 1-phosphate (Rib-1-P) to deoxy-ribose 5-phosphate (dRib-5-P) and ribose 5-phosphate (Rib-5-P), respectively. The protein is Phosphopentomutase of Bacillus cereus (strain AH187).